Consider the following 279-residue polypeptide: S-methyl-5'-thioadenosine phosphorylase (279 aa).

Phosphate is bound by residues Ser-13, 55 to 56 (RH), and 88 to 89 (TA). Met-191 lines the substrate pocket. Thr-192 is a phosphate binding site. 215 to 217 (DYD) is a substrate binding site.

Belongs to the PNP/MTAP phosphorylase family. MTAP subfamily. In terms of assembly, homotrimer.

The protein localises to the cytoplasm. Its subcellular location is the nucleus. It catalyses the reaction S-methyl-5'-thioadenosine + phosphate = 5-(methylsulfanyl)-alpha-D-ribose 1-phosphate + adenine. Its pathway is amino-acid biosynthesis; L-methionine biosynthesis via salvage pathway; S-methyl-5-thio-alpha-D-ribose 1-phosphate from S-methyl-5'-thioadenosine (phosphorylase route): step 1/1. In terms of biological role, catalyzes the reversible phosphorylation of S-methyl-5'-thioadenosine (MTA) to adenine and 5-methylthioribose-1-phosphate. Involved in the breakdown of MTA, a major by-product of polyamine biosynthesis. Responsible for the first step in the methionine salvage pathway after MTA has been generated from S-adenosylmethionine. Has broad substrate specificity with 6-aminopurine nucleosides as preferred substrates. In Aedes aegypti (Yellowfever mosquito), this protein is S-methyl-5'-thioadenosine phosphorylase.